The sequence spans 490 residues: Probable cytosol aminopeptidase (490 aa).

Mn(2+) contacts are provided by Lys-257 and Asp-262. Residue Lys-269 is part of the active site. The Mn(2+) site is built by Asp-281, Asp-341, and Glu-343. Arg-345 is an active-site residue.

It belongs to the peptidase M17 family. Mn(2+) is required as a cofactor.

The protein localises to the cytoplasm. It carries out the reaction Release of an N-terminal amino acid, Xaa-|-Yaa-, in which Xaa is preferably Leu, but may be other amino acids including Pro although not Arg or Lys, and Yaa may be Pro. Amino acid amides and methyl esters are also readily hydrolyzed, but rates on arylamides are exceedingly low.. The catalysed reaction is Release of an N-terminal amino acid, preferentially leucine, but not glutamic or aspartic acids.. Presumably involved in the processing and regular turnover of intracellular proteins. Catalyzes the removal of unsubstituted N-terminal amino acids from various peptides. The protein is Probable cytosol aminopeptidase of Prochlorococcus marinus (strain MIT 9312).